Reading from the N-terminus, the 286-residue chain is MNFGIVVNISREQALHLARTLATWFDERHIGYMFETLSGSTLGLGPSAPIEELNCHCDVFISLGGDGTLLFTSHHAVTKPVIGINVGYLGFLAEFTQSEMFAAVEKVLSGNYSLHTRSQLEATAFMDGVSHQFRALNDAVLEKGTYPRIPAFIIKLDGELLSAYRADGIIIATSTGSTAYSMSAGGPIIAPKSSVFVITPICPHMLTVRPIVISDDKVIEISVDAPDGEFPLNCDGSLKKMLAPHECITIKKSPVAINLVANEKRNYGEILRTKLLWGREHDGCCS.

Residue Asp-66 is the Proton acceptor of the active site. NAD(+)-binding positions include 66–67 (DG), 137–138 (ND), Arg-148, Arg-165, Asp-167, and 178–183 (TAYSMS).

Belongs to the NAD kinase family. Requires a divalent metal cation as cofactor.

It is found in the cytoplasm. The enzyme catalyses NAD(+) + ATP = ADP + NADP(+) + H(+). In terms of biological role, involved in the regulation of the intracellular balance of NAD and NADP, and is a key enzyme in the biosynthesis of NADP. Catalyzes specifically the phosphorylation on 2'-hydroxyl of the adenosine moiety of NAD to yield NADP. This chain is NAD kinase, found in Chlorobium chlorochromatii (strain CaD3).